The chain runs to 347 residues: NADH-ubiquinone oxidoreductase chain 2 (347 aa).

The next 10 membrane-spanning stretches (helical) occupy residues Ile-13–Leu-33, Ala-55–Leu-75, Leu-96–Pro-116, Pro-123–Tyr-143, Asn-150–Leu-170, Ile-178–Pro-198, Thr-201–Leu-221, Thr-247–Ile-267, Ile-277–Ile-297, and Phe-325–Met-345.

It belongs to the complex I subunit 2 family. Core subunit of respiratory chain NADH dehydrogenase (Complex I) which is composed of 45 different subunits. Interacts with TMEM242.

The protein localises to the mitochondrion inner membrane. It carries out the reaction a ubiquinone + NADH + 5 H(+)(in) = a ubiquinol + NAD(+) + 4 H(+)(out). Functionally, core subunit of the mitochondrial membrane respiratory chain NADH dehydrogenase (Complex I) which catalyzes electron transfer from NADH through the respiratory chain, using ubiquinone as an electron acceptor. Essential for the catalytic activity and assembly of complex I. This chain is NADH-ubiquinone oxidoreductase chain 2, found in Gorilla gorilla gorilla (Western lowland gorilla).